The sequence spans 337 residues: Tryptophan--tRNA ligase (337 aa).

Residues 11–13 (QPT) and 19–20 (GN) contribute to the ATP site. The 'HIGH' region signature appears at 12 to 20 (PTGALHLGN). Residue aspartate 135 coordinates L-tryptophan. Residues 147–149 (GED), valine 191, and 200–204 (KMSKS) contribute to the ATP site. The 'KMSKS' region signature appears at 200 to 204 (KMSKS).

This sequence belongs to the class-I aminoacyl-tRNA synthetase family. In terms of assembly, homodimer.

The protein localises to the cytoplasm. The enzyme catalyses tRNA(Trp) + L-tryptophan + ATP = L-tryptophyl-tRNA(Trp) + AMP + diphosphate + H(+). In terms of biological role, catalyzes the attachment of tryptophan to tRNA(Trp). This chain is Tryptophan--tRNA ligase, found in Parasynechococcus marenigrum (strain WH8102).